Reading from the N-terminus, the 320-residue chain is MGPWSRVRVAKCQMLVTCFFILLLGLSVATMVTLTYFGAHFAVIRRASLEKNPYQAVHQWAFSAGLSLVGLLTLGAVLSAAATVREAQGLMAGGFLCFSLAFCAQVQVVFWRLHSPTQVEDAMLDTYDLVYEQAMKGTSHVRRQELAAIQDVFLCCGKKSPFSRLGSTEADLCQGEEAAREDCLQGIRSFLRTHQQVASSLTSIGLALTVSALLFSSFLWFAIRCGCSLDRKGKYTLTPRACGRQPQEPSLLRCSQGGPTHCLHSEAVAIGPRGCSGSLRWLQESDAAPLPLSCHLAAHRALQGRSRGGLSGCPERGLSD.

The next 4 helical transmembrane spans lie at 14–34 (MLVT…MVTL), 60–80 (WAFS…VLSA), 90–110 (LMAG…QVVF), and 203–223 (SIGL…WFAI).

The protein belongs to the tetraspanin (TM4SF) family. As to expression, expressed ubiquitously at low levels. High levels of expression are confined to hematopoietic tissues including peripheral blood leukocytes, thymus and spleen.

The protein resides in the membrane. The protein is Tetraspanin-32 (TSPAN32) of Homo sapiens (Human).